A 465-amino-acid chain; its full sequence is MSSTNHFTYLVLGAGSGGIASARRAAKHLNAKGNGDRIGIVEVTRPGGTCVNVGCVPKKVMWNTSFIKEMINAAPSYGFDFGGQQVKFNWPTIKKARDEYIKRLNGIYDSNLAKDNIVRINGYGRFSGPKEIQVNGANGEKYTADHILIAAGGRPTVPDVPGKELGITSDGFFELEDLPKSTLVVGAGYIAVELAGVLHSLGSETTMVIRQKQFLRTFDEMLHTTLLKQMTDDGVKFVTEASIKSLERDVDGKRIIATTNAGVKLPPVECVIWAIGRVPNTDDLGIDKAGIQLTEQSGFIKVDEFQNTNVPGVHAVGDICGNFLLTPVAIAAGRRLSERLFNGKSDLKFEYENVATVVFSHPPIGTVGLTEQEAITKYGTENIKCYNTSFINMFYSVQVHKVRTSMKLVCLGKEEKVIGLHIIGDGCDEIIQGFAVAVKMGCTKWDLDNTCAIHPTSAEELVTMV.

Residues Ser-16 and Gly-17 each contribute to the FAD site. Ser-16 serves as a coordination point for glutathione. Arg-23 is a glutathione binding site. FAD contacts are provided by Glu-42, Thr-49, Cys-50, and Lys-58. Cys-50 and Cys-55 form a disulfide bridge. Residue Tyr-108 participates in glutathione binding. Position 124 (Gly-124) interacts with FAD. NADP(+) contacts are provided by Ala-187, Ile-190, Glu-193, Arg-210, Arg-216, and Gly-276. Residue Asp-318 coordinates FAD. Leu-324 serves as a coordination point for NADP(+). Position 326 (Thr-326) interacts with FAD. Arg-334 contributes to the glutathione binding site. Residue Val-357 coordinates NADP(+). His-454 contacts FAD. The active-site Proton acceptor is His-454.

It belongs to the class-I pyridine nucleotide-disulfide oxidoreductase family. It depends on FAD as a cofactor.

The protein resides in the cytoplasm. It carries out the reaction 2 glutathione + NADP(+) = glutathione disulfide + NADPH + H(+). Its function is as follows. Catalyzes the reduction of glutathione disulfide (GSSG) to reduced glutathione (GSH). Constitutes the major mechanism to maintain a high GSH:GSSG ratio in the cytosol. The amount of GSH may affect the determination of cell fate. In Dictyostelium discoideum (Social amoeba), this protein is Glutathione reductase (gsr).